The chain runs to 458 residues: Bifunctional protein GlmU (458 aa).

The tract at residues 1-229 (MNKFAIVLAA…FDESLGVNDR (229 aa)) is pyrophosphorylase. UDP-N-acetyl-alpha-D-glucosamine contacts are provided by residues 8-11 (LAAG), Lys-22, Gln-72, and 77-78 (GT). Asp-102 is a binding site for Mg(2+). UDP-N-acetyl-alpha-D-glucosamine is bound by residues Gly-139, Glu-154, Asn-169, and Asn-227. Asn-227 is a Mg(2+) binding site. The interval 230 to 250 (VALSQAEATMRKRINHEHMVN) is linker. An N-acetyltransferase region spans residues 251 to 458 (GVTLIDPATT…AKKMPHYRGQ (208 aa)). UDP-N-acetyl-alpha-D-glucosamine contacts are provided by Arg-332 and Lys-350. The Proton acceptor role is filled by His-362. 2 residues coordinate UDP-N-acetyl-alpha-D-glucosamine: Tyr-365 and Asn-376. Positions 379, 404, 422, and 439 each coordinate acetyl-CoA.

This sequence in the N-terminal section; belongs to the N-acetylglucosamine-1-phosphate uridyltransferase family. In the C-terminal section; belongs to the transferase hexapeptide repeat family. As to quaternary structure, homotrimer. Requires Mg(2+) as cofactor.

Its subcellular location is the cytoplasm. The enzyme catalyses alpha-D-glucosamine 1-phosphate + acetyl-CoA = N-acetyl-alpha-D-glucosamine 1-phosphate + CoA + H(+). It catalyses the reaction N-acetyl-alpha-D-glucosamine 1-phosphate + UTP + H(+) = UDP-N-acetyl-alpha-D-glucosamine + diphosphate. Its pathway is nucleotide-sugar biosynthesis; UDP-N-acetyl-alpha-D-glucosamine biosynthesis; N-acetyl-alpha-D-glucosamine 1-phosphate from alpha-D-glucosamine 6-phosphate (route II): step 2/2. The protein operates within nucleotide-sugar biosynthesis; UDP-N-acetyl-alpha-D-glucosamine biosynthesis; UDP-N-acetyl-alpha-D-glucosamine from N-acetyl-alpha-D-glucosamine 1-phosphate: step 1/1. It participates in bacterial outer membrane biogenesis; LPS lipid A biosynthesis. Its function is as follows. Catalyzes the last two sequential reactions in the de novo biosynthetic pathway for UDP-N-acetylglucosamine (UDP-GlcNAc). The C-terminal domain catalyzes the transfer of acetyl group from acetyl coenzyme A to glucosamine-1-phosphate (GlcN-1-P) to produce N-acetylglucosamine-1-phosphate (GlcNAc-1-P), which is converted into UDP-GlcNAc by the transfer of uridine 5-monophosphate (from uridine 5-triphosphate), a reaction catalyzed by the N-terminal domain. The protein is Bifunctional protein GlmU of Lactococcus lactis subsp. cremoris (strain MG1363).